The primary structure comprises 737 residues: Pentatricopeptide repeat-containing protein At3g49740 (737 aa).

PPR repeat units follow at residues 20–55 (TLLN…TLRP), 56–90 (DQYS…GLLC), 91–121 (HSHV…IDEP), 122–152 (DVYS…MPER), 154–188 (DVAI…GVRH), 189–222 (DKFG…GFFI), 223–253 (ASSV…TDVA), 256–289 (DQVT…SLRP), 290–321 (TDLT…GYEK), 322–352 (YTLV…LEEK), 353–387 (DLVT…GVKP), 388–418 (DEFT…FGLS), 420–454 (KIEI…NLIS), 455–485 (WNAI…EVRI), 488–522 (DAYT…GQFK), 523–553 (ETLI…MSEK), 554–588 (DVVS…GKVI), 590–620 (DAAT…MVEF), and 626–656 (NVDH…SEKT). Residues 663–737 (VWWALFSACA…KQRGCSWMRL (75 aa)) are type E motif; degenerate.

The protein belongs to the PPR family. PCMP-E subfamily.

The chain is Pentatricopeptide repeat-containing protein At3g49740 (PCMP-E84) from Arabidopsis thaliana (Mouse-ear cress).